The sequence spans 367 residues: Alginate lyase (367 aa).

An N-terminal signal peptide occupies residues Met-1–Ala-27. Substrate contacts are provided by residues Ser-65–Lys-66, His-138–Thr-139, and Tyr-256.

It belongs to the polysaccharide lyase 5 family.

The protein localises to the periplasm. The catalysed reaction is Eliminative cleavage of alginate to give oligosaccharides with 4-deoxy-alpha-L-erythro-hex-4-enuronosyl groups at their non-reducing ends and beta-D-mannuronate at their reducing end.. In terms of biological role, catalyzes the depolymerization of alginate by cleaving the beta-1,4 glycosidic bond between two adjacent sugar residues via a beta-elimination mechanism. May serve to degrade mislocalized alginate that is trapped in the periplasmic space. In Pseudomonas paraeruginosa (strain DSM 24068 / PA7) (Pseudomonas aeruginosa (strain PA7)), this protein is Alginate lyase.